We begin with the raw amino-acid sequence, 100 residues long: UPF0235 protein Cvib_0403 (100 aa).

The protein belongs to the UPF0235 family.

This Chlorobium phaeovibrioides (strain DSM 265 / 1930) (Prosthecochloris vibrioformis (strain DSM 265)) protein is UPF0235 protein Cvib_0403.